A 274-amino-acid polypeptide reads, in one-letter code: Large ribosomal subunit protein uL2cz/uL2cy (274 aa).

Disordered stretches follow at residues 1–21 (MAIH…VDSQ) and 224–252 (NPVD…GYPA).

Belongs to the universal ribosomal protein uL2 family. As to quaternary structure, part of the 50S ribosomal subunit.

The protein resides in the plastid. It is found in the chloroplast. The sequence is that of Large ribosomal subunit protein uL2cz/uL2cy (rpl2-A) from Olimarabidopsis pumila (Dwarf rocket).